The chain runs to 813 residues: ATP-dependent zinc metalloprotease FTSH 10, mitochondrial (813 aa).

A mitochondrion-targeting transit peptide spans 1–86 (MIFSKLGSSL…FANPRLRRFF (86 aa)). Residues 93 to 129 (KKNYENYYPKDSKKAPKNEQKSESRDGSKKNENENAG) form a disordered region. Residues 94-125 (KNYENYYPKDSKKAPKNEQKSESRDGSKKNEN) are compositionally biased toward basic and acidic residues. The chain crosses the membrane as a helical span at residues 139 to 157 (MLIPLMAIALILSTFSLGS). Residue 367 to 374 (GPPGTGKT) coordinates ATP. Histidine 592 is a binding site for Zn(2+). The active site involves glutamate 593. Zn(2+) is bound by residues histidine 596 and aspartate 668. Basic and acidic residues predominate over residues 764-790 (RPFKSGETTNYDRFKSGFEESEKESQK). The tract at residues 764 to 813 (RPFKSGETTNYDRFKSGFEESEKESQKESVPVKPVEDDGIPPLEPQVVPT) is disordered.

The protein in the N-terminal section; belongs to the AAA ATPase family. This sequence in the C-terminal section; belongs to the peptidase M41 family. Requires Zn(2+) as cofactor.

It is found in the mitochondrion inner membrane. In terms of biological role, probable ATP-dependent zinc metallopeptidase. Involved in the assembly and/or stability of the complexes I and V of the mitochondrial oxidative phosphorylation system. This Arabidopsis thaliana (Mouse-ear cress) protein is ATP-dependent zinc metalloprotease FTSH 10, mitochondrial (FTSH10).